A 155-amino-acid chain; its full sequence is Large ribosomal subunit protein uL13 (155 aa).

This sequence belongs to the universal ribosomal protein uL13 family. In terms of assembly, part of the 50S ribosomal subunit.

In terms of biological role, this protein is one of the early assembly proteins of the 50S ribosomal subunit, although it is not seen to bind rRNA by itself. It is important during the early stages of 50S assembly. This Rickettsia typhi (strain ATCC VR-144 / Wilmington) protein is Large ribosomal subunit protein uL13.